The following is a 338-amino-acid chain: RNA 3'-terminal phosphate cyclase (338 aa).

Residues Q103 and 283 to 287 each bind ATP; that span reads YLADQ. The active-site Tele-AMP-histidine intermediate is H308.

Belongs to the RNA 3'-terminal cyclase family. Type 1 subfamily.

Its subcellular location is the cytoplasm. The catalysed reaction is a 3'-end 3'-phospho-ribonucleotide-RNA + ATP = a 3'-end 2',3'-cyclophospho-ribonucleotide-RNA + AMP + diphosphate. Functionally, catalyzes the conversion of 3'-phosphate to a 2',3'-cyclic phosphodiester at the end of RNA. The mechanism of action of the enzyme occurs in 3 steps: (A) adenylation of the enzyme by ATP; (B) transfer of adenylate to an RNA-N3'P to produce RNA-N3'PP5'A; (C) and attack of the adjacent 2'-hydroxyl on the 3'-phosphorus in the diester linkage to produce the cyclic end product. The biological role of this enzyme is unknown but it is likely to function in some aspects of cellular RNA processing. This is RNA 3'-terminal phosphate cyclase from Escherichia coli O6:H1 (strain CFT073 / ATCC 700928 / UPEC).